A 167-amino-acid polypeptide reads, in one-letter code: ATP synthase subunit b (167 aa).

The chain crosses the membrane as a helical span at residues 7–25; sequence SFLLAVSFVIFIYLIYRPA.

Belongs to the ATPase B chain family. As to quaternary structure, F-type ATPases have 2 components, F(1) - the catalytic core - and F(0) - the membrane proton channel. F(1) has five subunits: alpha(3), beta(3), gamma(1), delta(1), epsilon(1). F(0) has three main subunits: a(1), b(2) and c(10-14). The alpha and beta chains form an alternating ring which encloses part of the gamma chain. F(1) is attached to F(0) by a central stalk formed by the gamma and epsilon chains, while a peripheral stalk is formed by the delta and b chains.

It is found in the cell inner membrane. Its function is as follows. F(1)F(0) ATP synthase produces ATP from ADP in the presence of a proton or sodium gradient. F-type ATPases consist of two structural domains, F(1) containing the extramembraneous catalytic core and F(0) containing the membrane proton channel, linked together by a central stalk and a peripheral stalk. During catalysis, ATP synthesis in the catalytic domain of F(1) is coupled via a rotary mechanism of the central stalk subunits to proton translocation. Functionally, component of the F(0) channel, it forms part of the peripheral stalk, linking F(1) to F(0). The chain is ATP synthase subunit b from Rickettsia typhi (strain ATCC VR-144 / Wilmington).